Reading from the N-terminus, the 147-residue chain is Hemoglobin subunit epsilon (147 aa).

The Globin domain maps to 3 to 147 (HLTAEEKSSV…VATALAHKYH (145 aa)). 2 positions are modified to phosphoserine: Ser14 and Ser51. Residues His64 and His93 each contribute to the heme b site.

It belongs to the globin family. Heterotetramer of two alpha chains and two epsilon chains in early embryonic hemoglobin Gower-2; two zeta chains and two epsilon chains in early embryonic hemoglobin Gower-1. In terms of tissue distribution, red blood cells.

The epsilon chain is a beta-type chain of early mammalian embryonic hemoglobin. In Carlito syrichta (Philippine tarsier), this protein is Hemoglobin subunit epsilon (HBE1).